The primary structure comprises 536 residues: Atrial natriuretic peptide receptor 3 (536 aa).

Residues 1–26 form the signal peptide; it reads MRSLLLFTFSACVLLARVLLAGGASS. Residues 27 to 40 constitute a propeptide that is removed on maturation; it reads GAGDTRPGSRRRAR. Over 41 to 478 the chain is Extracellular; it reads EALAAQKIEV…KSSGGLEESA (438 aa). Asn81 carries N-linked (GlcNAc...) asparagine glycosylation. Positions 101, 130, and 131 each coordinate chloride. Disulfide bonds link Cys103/Cys131 and Cys208/Cys256. Asn288 and Asn389 each carry an N-linked (GlcNAc...) asparagine glycan. A helical membrane pass occupies residues 479–499; the sequence is VTGIVVGALLGAGLLMAFYFF. Topologically, residues 500–536 are cytoplasmic; that stretch reads RKKYRITIERRNQQEESNIGKHRELREDSIRSHFSVA.

This sequence belongs to the ANF receptor family. In terms of assembly, homodimer; disulfide-linked. Interacts with OSTN.

The protein resides in the cell membrane. Functionally, receptor for the natriuretic peptide hormones, binding with similar affinities atrial natriuretic peptide NPPA/ANP, brain natriuretic peptide NPPB/BNP, and C-type natriuretic peptide NPPC/CNP. May function as a clearance receptor for NPPA, NPPB and NPPC, regulating their local concentrations and effects. Acts as a regulator of osteoblast differentiation and bone growth by binding to its ligand osteocrin, thereby preventing binding between NPR3/NPR-C and natriuretic peptides, leading to increase cGMP production. The chain is Atrial natriuretic peptide receptor 3 (Npr3) from Mus musculus (Mouse).